Here is a 283-residue protein sequence, read N- to C-terminus: Bifunctional protein FolD (283 aa).

NADP(+)-binding positions include 166–168 (GQS), serine 191, and isoleucine 232.

Belongs to the tetrahydrofolate dehydrogenase/cyclohydrolase family. As to quaternary structure, homodimer.

It carries out the reaction (6R)-5,10-methylene-5,6,7,8-tetrahydrofolate + NADP(+) = (6R)-5,10-methenyltetrahydrofolate + NADPH. The catalysed reaction is (6R)-5,10-methenyltetrahydrofolate + H2O = (6R)-10-formyltetrahydrofolate + H(+). The protein operates within one-carbon metabolism; tetrahydrofolate interconversion. In terms of biological role, catalyzes the oxidation of 5,10-methylenetetrahydrofolate to 5,10-methenyltetrahydrofolate and then the hydrolysis of 5,10-methenyltetrahydrofolate to 10-formyltetrahydrofolate. This is Bifunctional protein FolD from Laribacter hongkongensis (strain HLHK9).